The sequence spans 135 residues: Retinol-binding protein 5 (135 aa).

The protein belongs to the calycin superfamily. Fatty-acid binding protein (FABP) family. In terms of tissue distribution, kidney.

It is found in the cytoplasm. Functionally, intracellular transport of retinol. The chain is Retinol-binding protein 5 (RBP5) from Bos taurus (Bovine).